The chain runs to 162 residues: Ecotin (162 aa).

The first 18 residues, 1-18 (MKMFVPAVVFAASASAWA), serve as a signal peptide directing secretion. Cys70 and Cys107 form a disulfide bridge.

This sequence belongs to the protease inhibitor I11 (ecotin) family. Homodimer.

It is found in the periplasm. General inhibitor of pancreatic serine proteases: inhibits chymotrypsin, trypsin, elastases, factor X, kallikrein as well as a variety of other proteases. In Salmonella arizonae (strain ATCC BAA-731 / CDC346-86 / RSK2980), this protein is Ecotin.